The following is a 155-amino-acid chain: uncharacterized protein (155 aa).

In terms of domain architecture, HTH asnC-type spans 4-65 (IDEIDEVIVR…VVDPSFFGEF (62 aa)). The H-T-H motif DNA-binding region spans 23 to 42 (LTELGRKVGLTASAVKNRIE).

This is an uncharacterized protein from Pyrococcus horikoshii (strain ATCC 700860 / DSM 12428 / JCM 9974 / NBRC 100139 / OT-3).